Here is a 303-residue protein sequence, read N- to C-terminus: D-alanine--D-alanine ligase (303 aa).

The ATP-grasp domain occupies 102–298 (RILLAAAGLP…YPELCDWMVR (197 aa)). 128-181 (PLPAPYVIKPVAEGSSVGVEIVRTGDNRRAEIARTWRFGKEALVESFIPGRELT) lines the ATP pocket. Mg(2+) contacts are provided by aspartate 251, glutamate 265, and asparagine 267.

Belongs to the D-alanine--D-alanine ligase family. Mg(2+) serves as cofactor. Mn(2+) is required as a cofactor.

The protein localises to the cytoplasm. It carries out the reaction 2 D-alanine + ATP = D-alanyl-D-alanine + ADP + phosphate + H(+). Its pathway is cell wall biogenesis; peptidoglycan biosynthesis. Cell wall formation. The chain is D-alanine--D-alanine ligase from Gluconobacter oxydans (strain 621H) (Gluconobacter suboxydans).